A 121-amino-acid chain; its full sequence is Large ribosomal subunit protein bL19 (121 aa).

Belongs to the bacterial ribosomal protein bL19 family.

In terms of biological role, this protein is located at the 30S-50S ribosomal subunit interface and may play a role in the structure and function of the aminoacyl-tRNA binding site. This Chlamydia pneumoniae (Chlamydophila pneumoniae) protein is Large ribosomal subunit protein bL19 (rplS).